The sequence spans 231 residues: Orotate phosphoribosyltransferase (231 aa).

5-phospho-alpha-D-ribose 1-diphosphate-binding positions include lysine 27, 79–80, arginine 106, lysine 107, lysine 110, histidine 112, and 133–141; these read YK and DDVMTAGTA. Residues threonine 137 and arginine 166 each contribute to the orotate site.

It belongs to the purine/pyrimidine phosphoribosyltransferase family. PyrE subfamily. In terms of assembly, homodimer. It depends on Mg(2+) as a cofactor.

The catalysed reaction is orotidine 5'-phosphate + diphosphate = orotate + 5-phospho-alpha-D-ribose 1-diphosphate. It functions in the pathway pyrimidine metabolism; UMP biosynthesis via de novo pathway; UMP from orotate: step 1/2. Its function is as follows. Catalyzes the transfer of a ribosyl phosphate group from 5-phosphoribose 1-diphosphate to orotate, leading to the formation of orotidine monophosphate (OMP). The sequence is that of Orotate phosphoribosyltransferase from Bifidobacterium longum (strain DJO10A).